The sequence spans 834 residues: MPRYPFRRFGFGALRRLLYLWVRSETINQSAFTLKIDRSKPVLYVLQQPSVSDLAVVDTECRKAGLPRPVMPVAVGDAIEPAAFFYLTPEPDWLGRQDKRGASPTLVRMLAAVGQNGLDDAQIIPVSVFWGQSPDSESSPWKLLFADNWAVTGRLRKLARILILGRKTRVQFSAPIHLRELVEQGKGHERTLRMVNRILRVHFRNLKTAVIGPDLSHRRNLVKGLLRAPLVRQAISEECESERISQEKAEGIALRYANEIASDFSYPVIRFLEVILSWFWNKLYEGVKVNHIERVQDVAQGNEIVYVPCHRSHIDYLLLSYLLFRNGLTPPHIAAGINLNMPVIGSILRRGGAFFMRRSFKGNQLYTAVFNEYLHTLFSRGFSTEYFVEGGRSRTGRMLHPRTGMLAITLRSFLRDSRRPIVFVPVYIGYERVLEGRTYLGELRGATKKKESIFDLFKVVGALKQRFGQVWVNFGEPIHLDQFLDRHQPDWQDQDLGPEYRPDWLPQTTNLLAKDVARHLNDAAAINPVNLVALALLSTSRQALDESALARILDLYLALLRQVPYSPSATLPDGDGQALIEYVKSMNLLAEQKDALGRILYLDEQNAVLATYYRNNVLHVFALPALIASFFQSNSRISREQLLRFARALYPYLQAELFIRWSLDELDAVIDQWLAALVEQGLLRQENDTFIRPAPSSRQYVLLILLARSVTQTLQRFYMAIALLLNAGQNALTAEELENLCTVMAQRLSILHGLNAPEFFDKSLFRHFIQTLLDLRVLRKDETGKLSYHELLGELAEGAAKRVLPAEIRLSIRQVALERPAEEAAAESNDAATN.

The HXXXXD motif motif lies at 309–314; the sequence is CHRSHI.

It belongs to the GPAT/DAPAT family.

It is found in the cell inner membrane. The enzyme catalyses sn-glycerol 3-phosphate + an acyl-CoA = a 1-acyl-sn-glycero-3-phosphate + CoA. It participates in phospholipid metabolism; CDP-diacylglycerol biosynthesis; CDP-diacylglycerol from sn-glycerol 3-phosphate: step 1/3. The chain is Glycerol-3-phosphate acyltransferase from Pseudomonas paraeruginosa (strain DSM 24068 / PA7) (Pseudomonas aeruginosa (strain PA7)).